A 426-amino-acid polypeptide reads, in one-letter code: 5-methylthioadenosine/S-adenosylhomocysteine deaminase (426 aa).

Zn(2+) is bound by residues His60 and His62. Substrate is bound by residues Glu89 and His179. His206 is a binding site for Zn(2+). Substrate contacts are provided by Glu209 and Asp294. Asp294 provides a ligand contact to Zn(2+).

Belongs to the metallo-dependent hydrolases superfamily. MTA/SAH deaminase family. The cofactor is Zn(2+).

It carries out the reaction S-adenosyl-L-homocysteine + H2O + H(+) = S-inosyl-L-homocysteine + NH4(+). The enzyme catalyses S-methyl-5'-thioadenosine + H2O + H(+) = S-methyl-5'-thioinosine + NH4(+). Catalyzes the deamination of 5-methylthioadenosine and S-adenosyl-L-homocysteine into 5-methylthioinosine and S-inosyl-L-homocysteine, respectively. Is also able to deaminate adenosine. This chain is 5-methylthioadenosine/S-adenosylhomocysteine deaminase, found in Dictyoglomus turgidum (strain DSM 6724 / Z-1310).